Consider the following 51-residue polypeptide: UPF0391 membrane protein PsycPRwf_2202 (51 aa).

2 helical membrane-spanning segments follow: residues 6-26 (IIFAVIALLASLLGFGGVAGL) and 27-47 (SQNFAYIFLVVAVILFIIGFI).

It belongs to the UPF0391 family.

The protein resides in the cell membrane. The chain is UPF0391 membrane protein PsycPRwf_2202 from Psychrobacter sp. (strain PRwf-1).